The following is a 74-amino-acid chain: Protein krueppel (74 aa).

4 consecutive C2H2-type zinc fingers follow at residues 1-4 (ERTH), 10-32 (FECS…MRLH), 38-60 (YHCT…LRVH), and 66-74 (YACELCASR).

The protein belongs to the krueppel C2H2-type zinc-finger protein family.

The protein resides in the nucleus. Krueppel is a gap class segmentation protein. The chain is Protein krueppel (Kr) from Euscelis plebejus (Leafhopper).